The primary structure comprises 203 residues: Holliday junction branch migration complex subunit RuvA (203 aa).

The interval 1–64 (MIGRLRGTLA…EDAQLLYGFI (64 aa)) is domain I. Residues 65–143 (GKRDRDFFRE…AWEVVPSMFA (79 aa)) are domain II. Positions 144 to 154 (LVPNQPDMPAG) are flexible linker. The segment at 155–203 (QVASAESDAVSALISLGYKPQEASKAVSAIKDKNLSSEDMIRRALKGMI) is domain III.

Belongs to the RuvA family. Homotetramer. Forms an RuvA(8)-RuvB(12)-Holliday junction (HJ) complex. HJ DNA is sandwiched between 2 RuvA tetramers; dsDNA enters through RuvA and exits via RuvB. An RuvB hexamer assembles on each DNA strand where it exits the tetramer. Each RuvB hexamer is contacted by two RuvA subunits (via domain III) on 2 adjacent RuvB subunits; this complex drives branch migration. In the full resolvosome a probable DNA-RuvA(4)-RuvB(12)-RuvC(2) complex forms which resolves the HJ.

The protein localises to the cytoplasm. The RuvA-RuvB-RuvC complex processes Holliday junction (HJ) DNA during genetic recombination and DNA repair, while the RuvA-RuvB complex plays an important role in the rescue of blocked DNA replication forks via replication fork reversal (RFR). RuvA specifically binds to HJ cruciform DNA, conferring on it an open structure. The RuvB hexamer acts as an ATP-dependent pump, pulling dsDNA into and through the RuvAB complex. HJ branch migration allows RuvC to scan DNA until it finds its consensus sequence, where it cleaves and resolves the cruciform DNA. This Pseudomonas fluorescens (strain SBW25) protein is Holliday junction branch migration complex subunit RuvA.